Reading from the N-terminus, the 419-residue chain is L-rhamnose isomerase (419 aa).

Residues His-262, Asp-294, and Asp-296 each contribute to the Mn(2+) site.

This sequence belongs to the rhamnose isomerase family. In terms of assembly, homotetramer. Mn(2+) serves as cofactor.

It is found in the cytoplasm. The catalysed reaction is L-rhamnopyranose = L-rhamnulose. It functions in the pathway carbohydrate degradation; L-rhamnose degradation; glycerone phosphate from L-rhamnose: step 1/3. Its function is as follows. Catalyzes the interconversion of L-rhamnose and L-rhamnulose. The chain is L-rhamnose isomerase from Escherichia coli O45:K1 (strain S88 / ExPEC).